A 199-amino-acid polypeptide reads, in one-letter code: Pectinesterase inhibitor 4 (199 aa).

Positions 1–25 (MLRFVVLSLTLMVFINSSNFPKTAA) are cleaved as a signal peptide. 4 N-linked (GlcNAc...) asparagine glycosylation sites follow: Asn16, Asn33, Asn43, and Asn83. A disulfide bond links Cys42 and Cys51. The cysteines at positions 109 and 158 are disulfide-linked.

It belongs to the PMEI family. In terms of assembly, binds reversibly to PME3 to inhibit its activity; the stability of the PME3-PMEI4 complex and the inhibition of the pectin methylesterase (PME) activity is pH-dependent, based on protonation status of amino-acids at the complex interface. Expressed in outer cell layer of roots, particularly in the root-hair zone. Expressed in roots and siliques.

Its subcellular location is the secreted. The protein localises to the extracellular space. It localises to the apoplast. Its function is as follows. Pectin methylesterase (PME) inhibitor that can target the root-expressed PME17 and PME3 in a pH-dependent manner, mainly in slightly acidic conditions (pH 6.3 and 5.0) but not at pH 7.5; this processus relies on changes in the protonation of amino acids involved in intermolecular and intramolecular interactions. Regulate de-methylesterification of pectins in roots and affects root growth. In Arabidopsis thaliana (Mouse-ear cress), this protein is Pectinesterase inhibitor 4.